Reading from the N-terminus, the 184-residue chain is UPF0398 protein BALH_1408 (184 aa).

Belongs to the UPF0398 family.

The chain is UPF0398 protein BALH_1408 from Bacillus thuringiensis (strain Al Hakam).